The chain runs to 145 residues: Large ribosomal subunit protein uL16 (145 aa).

This sequence belongs to the universal ribosomal protein uL16 family. As to quaternary structure, part of the 50S ribosomal subunit.

Functionally, binds 23S rRNA and is also seen to make contacts with the A and possibly P site tRNAs. This Exiguobacterium sp. (strain ATCC BAA-1283 / AT1b) protein is Large ribosomal subunit protein uL16.